Reading from the N-terminus, the 99-residue chain is MMLIECPNCGPRNENEFKYGGEAHVAYPEDPNALSDKEWSRYLFYRGNKKGIFAERWVHSGGCRKWFNALRDTVSYEFKAVYRAGEARPQLDSTEGGTR.

Zn(2+)-binding residues include C6, C9, H59, and C63.

This sequence belongs to the SoxD family. As to quaternary structure, heterotetramer composed of subunits alpha (SoxA), beta (SoxB), gamma (SoxG) and delta (SoxD).

The protein resides in the cytoplasm. It carries out the reaction sarcosine + (6S)-5,6,7,8-tetrahydrofolate + O2 = (6R)-5,10-methylene-5,6,7,8-tetrahydrofolate + glycine + H2O2. The enzyme catalyses sarcosine + O2 + H2O = formaldehyde + glycine + H2O2. With respect to regulation, inhibited by Zn(2+), Cu(2+), Cd(2+), Hg(2+), Ag(+), p-chloromercuribenzoate (p-CMB), iodoacetamide, N-ethylmaleimide, CN(-), o-phenanthroline and sodium lauryl sulfate. Its function is as follows. In the presence of tetrahydrofolate, catalyzes the oxidative demethylation of sarcosine to yield glycine, 5,10-methylenetetrahydrofolate and hydrogen peroxide. In the absence of tetrahydrofolate, catalyzes the oxidative demethylation of sarcosine to yield glycine, formaldehyde and hydrogen peroxide. Can also use N-methyl-L-alanine and N-ethyl-L-glycine. Is very specific for oxygen as an acceptor. The polypeptide is Sarcosine oxidase subunit delta (Corynebacterium sp. (strain U-96)).